Here is a 66-residue protein sequence, read N- to C-terminus: Cold shock-like protein CspLA (66 aa).

Residues 4-63 enclose the CSD domain; the sequence is GTVKWFNAEKGFGFIERENGDDVFVHFSAIQGDGFKSLDEGQAVTFDVEEGQRGPQAANV.

Homodimer.

It localises to the cytoplasm. This chain is Cold shock-like protein CspLA (cspLA), found in Listeria innocua serovar 6a (strain ATCC BAA-680 / CLIP 11262).